Here is a 500-residue protein sequence, read N- to C-terminus: L-arabinose isomerase (500 aa).

Residues Glu-306, Glu-333, His-350, and His-450 each coordinate Mn(2+).

It belongs to the arabinose isomerase family. As to quaternary structure, homohexamer. Requires Mn(2+) as cofactor.

The catalysed reaction is beta-L-arabinopyranose = L-ribulose. Its pathway is carbohydrate degradation; L-arabinose degradation via L-ribulose; D-xylulose 5-phosphate from L-arabinose (bacterial route): step 1/3. Catalyzes the conversion of L-arabinose to L-ribulose. This Shigella dysenteriae serotype 1 (strain Sd197) protein is L-arabinose isomerase.